The primary structure comprises 249 residues: MEDIVIVGRHAVKEAIISGHAINKILIQDGIKKQQINDILKNAKSQKLIVQTVPKSKLDFLANAPHQGVAALVAPYEYANFDEFLQKQKKKARYSTVIILDGLEDPHNLGSILRTADASGVDAVIIPKRRSVALTQTVAKASTGAIQHVPVIRVTNLSKTIDELKDNGFWIAGTEANNATDYRDLQADMSLGIVIGSEGQGMSRLVSDKCDFHIKIPMVGHVNSLNASVAASLMMYEVYRKRHQLEEKS.

Gly-196, Ile-216, and Leu-225 together coordinate S-adenosyl-L-methionine.

Belongs to the class IV-like SAM-binding methyltransferase superfamily. RNA methyltransferase TrmH family.

The polypeptide is Putative TrmH family tRNA/rRNA methyltransferase (Staphylococcus epidermidis (strain ATCC 35984 / DSM 28319 / BCRC 17069 / CCUG 31568 / BM 3577 / RP62A)).